A 1217-amino-acid chain; its full sequence is Rho family-interacting cell polarization regulator 1 (1217 aa).

Serine 22 is modified (phosphoserine). A coiled-coil region spans residues 83–112 (RGLTAYLEVHQQEQEKLQRQIKESKRNSRL). Serine 345 and serine 347 each carry phosphoserine. Residue threonine 351 is modified to Phosphothreonine. Residues 371 to 413 (NGTAWSLSSESSDDSSSPQLSGTARYSSTPKPLVQQPEPLPVQ) are disordered. 2 stretches are compositionally biased toward low complexity: residues 376–391 (SLSSESSDDSSSPQLS) and 400–413 (PKPLVQQPEPLPVQ). Residues serine 452 and serine 455 each carry the phosphoserine modification. The interval 565–762 (TSTTVGSTHK…SPSSIVPEPQ (198 aa)) is disordered. Polar residues predominate over residues 579–594 (PLTSTGSIPSVTDSIQ). Positions 595–649 (TTTSPTHTTPSPTHTTVSPTHSTPSPTHTTVSPSNAALSPSNATPSLSHSTTSPT) are enriched in low complexity. A compositionally biased stretch (polar residues) spans 650-661 (QKATMSTHTTSA). Positions 664-695 (PVQTTTSPISTTVSPSPSVDTAIISSSSAVPS) are enriched in low complexity. A compositionally biased stretch (polar residues) spans 720–729 (ACTSSPSLAS). The residue at position 742 (serine 742) is a Phosphoserine. Residues 786–828 (RRLEEALRTLMAALDDYRGQFPELQGLEQEVTRLESLLMQRQG) are a coiled coil. Residues 850-874 (FLNDDEDEDNDSPGDRPTSSPEVVA) form a disordered region. The span at 852–861 (NDDEDEDNDS) shows a compositional bias: acidic residues. A phosphoserine mark is found at serine 868 and serine 869.

The protein belongs to the RIPOR family. In terms of assembly, interacts (via N-terminus) with RHOA (GTP-bound form); this interaction links active RHOA to STK24 and STK26 kinases. Interacts with RHOB. Interacts with RHOC. Interacts (via C-terminus) with PDCD10; this interaction occurs in a Rho-independent manner. Interacts (via C-terminus) with STK24; this interaction occurs in a PDCD10-dependent and Rho-independent manner. Interacts (via C-terminus) with STK26; this interaction occurs in a PDCD10-dependent and Rho-independent manner. Interacts (via N-terminus) with 14-3-3 proteins; these interactions occur in a Rho-dependent manner.

The protein resides in the cytoplasm. It is found in the golgi apparatus. Its function is as follows. Downstream effector protein for Rho-type small GTPases that plays a role in cell polarity and directional migration. Acts as an adapter protein, linking active Rho proteins to STK24 and STK26 kinases, and hence positively regulates Golgi reorientation in polarized cell migration upon Rho activation. Involved in the subcellular relocation of STK26 from the Golgi to cytoplasm punctae in a Rho- and PDCD10-dependent manner upon serum stimulation. This is Rho family-interacting cell polarization regulator 1 from Rattus norvegicus (Rat).